The primary structure comprises 396 residues: Lysophospholipid transporter LplT (396 aa).

Over 1-17 the chain is Periplasmic; it reads MSESVHTNTSLWSKGMK. A helical membrane pass occupies residues 18–38; the sequence is AVIVAQFLSAFGDNALLFATL. The Cytoplasmic segment spans residues 39-52; sequence ALLKAQFYPEWSQP. The chain crosses the membrane as a helical span at residues 53-73; the sequence is ILQMVFVGAYILLAPFVGQVA. Over 74 to 90 the chain is Periplasmic; it reads DSFAKGRVMMFANGLKL. A helical membrane pass occupies residues 91–111; that stretch reads LGAASICFGINPFLGYTLVGV. Over 112-144 the chain is Cytoplasmic; that stretch reads GAAAYSPAKYGILGELTTGSKLVKANGLMEASA. The helical transmembrane segment at 145 to 165 threads the bilayer; sequence IAAILLGSVAGGVLADWHVLV. A topological domain (periplasmic) is located at residue Ala-166. Residues 167 to 187 form a helical membrane-spanning segment; it reads LAACALAYGGAVVANIYIPKL. Residues 188–225 are Cytoplasmic-facing; the sequence is AARPGQSWNLINMTRSFLNACTSLWCNGETRFSLVGTS. A helical membrane pass occupies residues 226-246; the sequence is LFWGAGVTLRFLLVLWVPVAL. Residues 247-255 lie on the Periplasmic side of the membrane; it reads GITDNATPT. A helical membrane pass occupies residues 256–276; that stretch reads YLNAMVAIGIVVGAGAAAKLV. The Cytoplasmic segment spans residues 277 to 279; that stretch reads TLE. The helical transmembrane segment at 280 to 300 threads the bilayer; that stretch reads TVSRCMPAGILIGVVVPIFSL. Residues 301–303 are Periplasmic-facing; sequence QHE. Residues 304 to 324 traverse the membrane as a helical segment; that stretch reads LLPAYALLMLIGVLGGFFVVP. Residues 325–342 are Cytoplasmic-facing; sequence LNALLQERGKKSVGAGNA. The helical transmembrane segment at 343–363 threads the bilayer; it reads IAVQNLGENSAMLLMLGIYSL. The Periplasmic segment spans residues 364-365; the sequence is AV. The helical transmembrane segment at 366-386 threads the bilayer; it reads MVGIPVVPIGIGFGALFALAI. At 387–396 the chain is on the cytoplasmic side; it reads TALWIWQRRH.

The protein belongs to the major facilitator superfamily. LplT (TC 2.A.1.42) family.

The protein localises to the cell inner membrane. Catalyzes the facilitated diffusion of 2-acyl-glycero-3-phosphoethanolamine (2-acyl-GPE) into the cell. The polypeptide is Lysophospholipid transporter LplT (Shigella flexneri).